A 458-amino-acid chain; its full sequence is Jacalin-related lectin 22 (458 aa).

3 consecutive Jacalin-type lectin domains span residues 5 to 153 (YRKL…YFVL), 160 to 301 (LYKL…YFGP), and 311 to 453 (SKKL…TIVP).

It belongs to the jacalin lectin family. As to quaternary structure, component of the PYK10 complex, at least composed of PYK10/BGLU23, BGLU21, BGLU22, JAL22, JAL23, PBP1/JAL30, PBP2/JAL31, JAL32, JAL33, JAL34, JAL35, GLL22 and GLL23.

Functionally, inhibitor-type lectin that may regulate the correct polymerization and activation of BGLU23/PYK10 upon tissue damage. The chain is Jacalin-related lectin 22 (JAL22) from Arabidopsis thaliana (Mouse-ear cress).